We begin with the raw amino-acid sequence, 120 residues long: Small ribosomal subunit protein eS24 (120 aa).

The tract at residues 101–120 is disordered; sequence RDAGTKQKKGGSKGGQGAKG.

This sequence belongs to the eukaryotic ribosomal protein eS24 family.

This chain is Small ribosomal subunit protein eS24, found in Saccharolobus islandicus (strain M.16.4 / Kamchatka #3) (Sulfolobus islandicus).